Here is a 461-residue protein sequence, read N- to C-terminus: Alcaligin biosynthesis enzyme (461 aa).

FAD is bound at residue 9–15; it reads VAIGIGP.

It belongs to the lysine N(6)-hydroxylase/L-ornithine N(5)-oxygenase family. The cofactor is FAD.

The protein operates within siderophore biosynthesis; alcaligin biosynthesis. In Bordetella parapertussis (strain 12822 / ATCC BAA-587 / NCTC 13253), this protein is Alcaligin biosynthesis enzyme (alcA).